Here is a 346-residue protein sequence, read N- to C-terminus: Putative [LysW]-L-2-aminoadipate/[LysW]-L-glutamate phosphate reductase (346 aa).

NADP(+) is bound at residue 12–15 (SGFT). The active site involves cysteine 147. The segment at 178–198 (GSSEGGAGGGDASSHPERSGV) is disordered. Position 310 (asparagine 310) interacts with NADP(+).

It belongs to the NAGSA dehydrogenase family. Type 1 subfamily. LysY sub-subfamily.

It localises to the cytoplasm. It carries out the reaction [amino-group carrier protein]-C-terminal-N-(1-carboxy-5-oxopentan-1-yl)-L-glutamine + phosphate + NADP(+) = [amino-group carrier protein]-C-terminal-N-(1-carboxy-5-phosphooxy-5-oxopentan-1-yl)-L-glutamine + NADPH + H(+). The catalysed reaction is [amino-group carrier protein]-C-terminal-gamma-(L-glutamyl-5-semialdehyde)-L-glutamate + phosphate + NADP(+) = [amino-group carrier protein]-C-terminal-gamma-(5-phospho-L-glutamyl)-L-glutamate + NADPH + H(+). It participates in amino-acid biosynthesis; L-lysine biosynthesis via AAA pathway; L-lysine from L-alpha-aminoadipate (Thermus route): step 3/5. Its pathway is amino-acid biosynthesis; L-arginine biosynthesis. Functionally, involved in both the arginine and lysine biosynthetic pathways. This chain is Putative [LysW]-L-2-aminoadipate/[LysW]-L-glutamate phosphate reductase, found in Haloquadratum walsbyi (strain DSM 16790 / HBSQ001).